Reading from the N-terminus, the 158-residue chain is Sec-independent protein translocase protein TatB (158 aa).

Residues 1-21 form a helical membrane-spanning segment; that stretch reads MFGISFSELLLVGLVALLVLG. A disordered region spans residues 73 to 158; that stretch reads DEARKMFAPN…HDSSLPPRAP (86 aa). Residues 80–90 are compositionally biased toward low complexity; it reads APNQPSENSPE.

It belongs to the TatB family. In terms of assembly, the Tat system comprises two distinct complexes: a TatABC complex, containing multiple copies of TatA, TatB and TatC subunits, and a separate TatA complex, containing only TatA subunits. Substrates initially bind to the TatABC complex, which probably triggers association of the separate TatA complex to form the active translocon.

The protein localises to the cell inner membrane. Part of the twin-arginine translocation (Tat) system that transports large folded proteins containing a characteristic twin-arginine motif in their signal peptide across membranes. Together with TatC, TatB is part of a receptor directly interacting with Tat signal peptides. TatB may form an oligomeric binding site that transiently accommodates folded Tat precursor proteins before their translocation. In Pseudomonas syringae pv. syringae (strain B728a), this protein is Sec-independent protein translocase protein TatB.